We begin with the raw amino-acid sequence, 802 residues long: Chondroitin sulfate synthase 1 (802 aa).

The Cytoplasmic segment spans residues 1 to 7 (MAARGRR). Residues 8–28 (AWLSVLLGLVLGFVLASRLVL) traverse the membrane as a helical; Signal-anchor for type II membrane protein segment. Residues 29-802 (PRASELKRAG…SNNNGSVRTA (774 aa)) lie on the Lumenal side of the membrane. The interval 34 to 82 (LKRAGPRRRASPEGCRSGQAAASQAGGARGDARGAQLWPPGSDPDGGPR) is disordered. Composition is skewed to low complexity over residues 49-59 (RSGQAAASQAG) and 66-78 (RGAQ…SDPD). N-linked (GlcNAc...) asparagine glycosylation is found at Asn-189 and Asn-623. A divalent metal cation is bound by residues Asp-633 and His-747. Asn-796 is a glycosylation site (N-linked (GlcNAc...) asparagine).

It belongs to the chondroitin N-acetylgalactosaminyltransferase family. Requires Co(2+) as cofactor. The cofactor is Mn(2+). Cd(2+) serves as cofactor. In terms of tissue distribution, ubiquitous, with the highest levels in placenta. Detected at low levels in brain, heart, skeletal muscle, colon, thymus, spleen, kidney, liver, adrenal gland, mammary gland, stomach, small intestine, lung and peripheral blood leukocytes.

It is found in the golgi apparatus. It localises to the golgi stack membrane. The protein localises to the secreted. It catalyses the reaction 3-O-(beta-D-GlcA-(1-&gt;3)-beta-D-GalNAc-(1-&gt;4)-beta-D-GlcA-(1-&gt;3)-beta-D-Gal-(1-&gt;3)-beta-D-Gal-(1-&gt;4)-beta-D-Xyl)-L-seryl-[protein] + UDP-N-acetyl-alpha-D-galactosamine = 3-O-(beta-D-GalNAc-(1-&gt;4)-beta-D-GlcA-(1-&gt;3)-beta-D-GalNAc-(1-&gt;4)-beta-D-GlcA-(1-&gt;3)-beta-D-Gal-(1-&gt;3)-beta-D-Gal-(1-&gt;4)-beta-D-Xyl)-L-seryl-[protein] + UDP + H(+). The enzyme catalyses 3-O-{beta-D-GlcA-(1-&gt;3)-[beta-D-GalNAc-(1-&gt;4)-beta-D-GlcA-(1-&gt;3)](n)-beta-D-GalNAc-(1-&gt;4)-beta-D-GlcA-(1-&gt;3)-beta-D-Gal-(1-&gt;3)-beta-D-Gal-(1-&gt;4)-beta-D-Xyl}-L-seryl-[protein] + UDP-N-acetyl-alpha-D-galactosamine = 3-O-{[beta-D-GalNAc-(1-&gt;4)-beta-D-GlcA-(1-&gt;3)](n+1)-beta-D-GalNAc-(1-&gt;4)-beta-D-GlcA-(1-&gt;3)-beta-D-Gal-(1-&gt;3)-beta-D-Gal-(1-&gt;4)-beta-D-Xyl}-L-seryl-[protein] + UDP + H(+). The catalysed reaction is 3-O-(beta-D-GalNAc-(1-&gt;4)-beta-D-GlcA-(1-&gt;3)-beta-D-Gal-(1-&gt;3)-beta-D-Gal-(1-&gt;4)-beta-D-Xyl)-L-seryl-[protein] + UDP-alpha-D-glucuronate = 3-O-(beta-D-GlcA-(1-&gt;3)-beta-D-GalNAc-(1-&gt;4)-beta-D-GlcA-(1-&gt;3)-beta-D-Gal-(1-&gt;3)-beta-D-Gal-(1-&gt;4)-beta-D-Xyl)-L-seryl-[protein] + UDP + H(+). It carries out the reaction 3-O-{[beta-D-GalNAc-(1-&gt;4)-beta-D-GlcA-(1-&gt;3)](n)-beta-D-GalNAc-(1-&gt;4)-beta-D-GlcA-(1-&gt;3)-beta-D-Gal-(1-&gt;3)-beta-D-Gal-(1-&gt;4)-beta-D-Xyl}-L-seryl-[protein] + UDP-alpha-D-glucuronate = 3-O-{beta-D-GlcA-(1-&gt;3)-[beta-D-GalNAc-(1-&gt;4)-beta-D-GlcA-(1-&gt;3)](n)-beta-D-GalNAc-(1-&gt;4)-beta-D-GlcA-(1-&gt;3)-beta-D-Gal-(1-&gt;3)-beta-D-Gal-(1-&gt;4)-beta-D-Xyl}-L-seryl-[protein] + UDP + H(+). Has both beta-1,3-glucuronic acid and beta-1,4-N-acetylgalactosamine transferase activity. Transfers glucuronic acid (GlcUA) from UDP-GlcUA and N-acetylgalactosamine (GalNAc) from UDP-GalNAc to the non-reducing end of the elongating chondroitin polymer. Involved in the negative control of osteogenesis likely through the modulation of NOTCH signaling. The sequence is that of Chondroitin sulfate synthase 1 from Homo sapiens (Human).